The sequence spans 215 residues: Ion-translocating oxidoreductase complex subunit G (215 aa).

A helical membrane pass occupies residues 9-29 (GLILSLFAIITSGLIALTYFG). Residue threonine 176 is modified to FMN phosphoryl threonine.

This sequence belongs to the RnfG family. The complex is composed of six subunits: RnfA, RnfB, RnfC, RnfD, RnfE and RnfG. Requires FMN as cofactor.

It is found in the cell inner membrane. Functionally, part of a membrane-bound complex that couples electron transfer with translocation of ions across the membrane. The chain is Ion-translocating oxidoreductase complex subunit G from Pseudoalteromonas atlantica (strain T6c / ATCC BAA-1087).